Reading from the N-terminus, the 161-residue chain is Allophycocyanin beta chain (161 aa).

Position 71 is an N4-methylasparagine (N71). Residue C81 participates in (2R,3E)-phycocyanobilin binding.

It belongs to the phycobiliprotein family. In terms of assembly, heterodimer of an alpha and a beta chain. In terms of processing, contains one covalently linked phycocyanobilin chromophore.

It localises to the cellular thylakoid membrane. Light-harvesting photosynthetic bile pigment-protein from the phycobiliprotein complex. Allophycocyanin has a maximum absorption at approximately 650 nanometers. The chain is Allophycocyanin beta chain (apcB) from Anabaena variabilis.